Consider the following 86-residue polypeptide: Small ribosomal subunit protein uS17 (86 aa).

This sequence belongs to the universal ribosomal protein uS17 family. As to quaternary structure, part of the 30S ribosomal subunit.

Its function is as follows. One of the primary rRNA binding proteins, it binds specifically to the 5'-end of 16S ribosomal RNA. The polypeptide is Small ribosomal subunit protein uS17 (Lactococcus lactis subsp. cremoris (strain SK11)).